Here is a 501-residue protein sequence, read N- to C-terminus: Ribose import ATP-binding protein RbsA (501 aa).

2 consecutive ABC transporter domains span residues 5-241 and 252-498; these read LSLE…VGRK and LRND…TGGV. 37-44 provides a ligand contact to ATP; the sequence is GENGAGKS.

It belongs to the ABC transporter superfamily. Ribose importer (TC 3.A.1.2.1) family. The complex is composed of an ATP-binding protein (RbsA), two transmembrane proteins (RbsC) and a solute-binding protein (RbsB).

It localises to the cell inner membrane. It carries out the reaction D-ribose(out) + ATP + H2O = D-ribose(in) + ADP + phosphate + H(+). In terms of biological role, part of the ABC transporter complex RbsABC involved in ribose import. Responsible for energy coupling to the transport system. The polypeptide is Ribose import ATP-binding protein RbsA (Hahella chejuensis (strain KCTC 2396)).